Reading from the N-terminus, the 202-residue chain is Protein phosphatase inhibitor 2 family member C (202 aa).

2 disordered regions span residues 1 to 51 and 71 to 118; these read MSAS…DESS and PGTS…EQES. The tract at residues 12-17 is required for binding PPP1CC; that stretch reads KGILKN. Over residues 19–35 the composition is skewed to low complexity; that stretch reads SSSGSSVATSGQQSGGT. The tract at residues 43–55 is required for binding PPP1CC; the sequence is KSQKWDESSILAA. Polar residues predominate over residues 71-80; it reads PGTSYMSVQD. Over residues 84-112 the composition is skewed to basic and acidic residues; the sequence is DSVRDVEGEDSVRGVEGKEATDASDHSCE. The tract at residues 144 to 147 is required for binding PPP1CC catalytic center, displacing metal ions and inhibition of PPP1CC catalytic activity; that stretch reads HYNE. The segment at 162 to 202 is disordered; it reads LQSEDNENEETPQGTNEEKTAAEESEEAPLTGGLQTQSCDP.

Belongs to the protein phosphatase inhibitor 2 family. In terms of tissue distribution, detected in sperm (at protein level).

Its function is as follows. Functions as a protein phosphatase inhibitor. It inhibits activity of the catalytic subunit of PP1 and weakly inhibits the activity of myosin-associated phosphates. The polypeptide is Protein phosphatase inhibitor 2 family member C (Homo sapiens (Human)).